A 955-amino-acid polypeptide reads, in one-letter code: Protein translocase subunit SecA (955 aa).

Residues Gln-87, 105 to 109, and Asp-494 contribute to the ATP site; that span reads GEGKT. Positions 861-955 are disordered; sequence ASPAPAAPRP…KKAPRTKRKR (95 aa). Positions 874–888 are enriched in low complexity; that stretch reads QEAAQQAQGTAAPSA. Positions 943 to 955 are enriched in basic residues; the sequence is SKGKKAPRTKRKR.

It belongs to the SecA family. As to quaternary structure, monomer and homodimer. Part of the essential Sec protein translocation apparatus which comprises SecA, SecYEG and auxiliary proteins SecDF. Other proteins may also be involved.

Its subcellular location is the cell membrane. It localises to the cytoplasm. It catalyses the reaction ATP + H2O + cellular proteinSide 1 = ADP + phosphate + cellular proteinSide 2.. In terms of biological role, part of the Sec protein translocase complex. Interacts with the SecYEG preprotein conducting channel. Has a central role in coupling the hydrolysis of ATP to the transfer of proteins into and across the cell membrane, serving as an ATP-driven molecular motor driving the stepwise translocation of polypeptide chains across the membrane. This is Protein translocase subunit SecA from Rhodococcus jostii (strain RHA1).